The sequence spans 230 residues: RING finger protein 141 (230 aa).

A lipid anchor (N-myristoyl glycine) is attached at G2. Residues 155 to 192 form an RING-type zinc finger; it reads CCICMDGRADLILPCAHSFCQKCIDKWSDRHRNCPICR.

It localises to the membrane. Functionally, may be involved in spermatogenesis. In Bos taurus (Bovine), this protein is RING finger protein 141 (RNF141).